We begin with the raw amino-acid sequence, 358 residues long: tRNA pseudouridine synthase D (358 aa).

The active-site Nucleophile is the D84. Positions 161 to 312 (GTPNYFGPQR…RRSLRLMVAD (152 aa)) constitute a TRUD domain.

Belongs to the pseudouridine synthase TruD family.

It catalyses the reaction uridine(13) in tRNA = pseudouridine(13) in tRNA. Its function is as follows. Responsible for synthesis of pseudouridine from uracil-13 in transfer RNAs. This chain is tRNA pseudouridine synthase D, found in Nitrosococcus oceani (strain ATCC 19707 / BCRC 17464 / JCM 30415 / NCIMB 11848 / C-107).